A 323-amino-acid chain; its full sequence is o-succinylbenzoate synthase (323 aa).

K134 acts as the Proton donor in catalysis. D162, E191, and D214 together coordinate Mg(2+). K236 serves as the catalytic Proton acceptor.

It belongs to the mandelate racemase/muconate lactonizing enzyme family. MenC type 1 subfamily. A divalent metal cation is required as a cofactor.

The catalysed reaction is (1R,6R)-6-hydroxy-2-succinyl-cyclohexa-2,4-diene-1-carboxylate = 2-succinylbenzoate + H2O. It functions in the pathway quinol/quinone metabolism; 1,4-dihydroxy-2-naphthoate biosynthesis; 1,4-dihydroxy-2-naphthoate from chorismate: step 4/7. It participates in quinol/quinone metabolism; menaquinone biosynthesis. In terms of biological role, converts 2-succinyl-6-hydroxy-2,4-cyclohexadiene-1-carboxylate (SHCHC) to 2-succinylbenzoate (OSB). This chain is o-succinylbenzoate synthase, found in Edwardsiella ictaluri (strain 93-146).